A 369-amino-acid chain; its full sequence is Phenylalanine--tRNA ligase alpha subunit (369 aa).

Glu-269 is a binding site for Mg(2+).

This sequence belongs to the class-II aminoacyl-tRNA synthetase family. Phe-tRNA synthetase alpha subunit type 1 subfamily. Tetramer of two alpha and two beta subunits. Requires Mg(2+) as cofactor.

It localises to the cytoplasm. It carries out the reaction tRNA(Phe) + L-phenylalanine + ATP = L-phenylalanyl-tRNA(Phe) + AMP + diphosphate + H(+). The sequence is that of Phenylalanine--tRNA ligase alpha subunit from Brucella melitensis biotype 1 (strain ATCC 23456 / CCUG 17765 / NCTC 10094 / 16M).